A 513-amino-acid polypeptide reads, in one-letter code: Chromosomal replication initiator protein DnaA (513 aa).

The tract at residues 1–87 (MSVELWQQCV…IGSKRSSAPR (87 aa)) is domain I, interacts with DnaA modulators. The interval 87–176 (RAAPNAPLAA…QVEGALKHTS (90 aa)) is domain II. The tract at residues 113 to 163 (AAPAPAPAPTSAPAKKAAAQKAAEVSEEPSRDSFDPMAGASSQQAPVRAEQ) is disordered. Low complexity predominate over residues 123–135 (SAPAKKAAAQKAA). Residues 177–393 (YLNRTFTFEN…GALKRVIAHS (217 aa)) are domain III, AAA+ region. 4 residues coordinate ATP: G221, G223, K224, and T225. The interval 394–513 (HFMGRDITIE…YKNLLRTLTT (120 aa)) is domain IV, binds dsDNA.

The protein belongs to the DnaA family. As to quaternary structure, oligomerizes as a right-handed, spiral filament on DNA at oriC.

Its subcellular location is the cytoplasm. Its function is as follows. Plays an essential role in the initiation and regulation of chromosomal replication. ATP-DnaA binds to the origin of replication (oriC) to initiate formation of the DNA replication initiation complex once per cell cycle. Binds the DnaA box (a 9 base pair repeat at the origin) and separates the double-stranded (ds)DNA. Forms a right-handed helical filament on oriC DNA; dsDNA binds to the exterior of the filament while single-stranded (ss)DNA is stabiized in the filament's interior. The ATP-DnaA-oriC complex binds and stabilizes one strand of the AT-rich DNA unwinding element (DUE), permitting loading of DNA polymerase. After initiation quickly degrades to an ADP-DnaA complex that is not apt for DNA replication. Binds acidic phospholipids. The protein is Chromosomal replication initiator protein DnaA of Pseudomonas fluorescens (strain ATCC BAA-477 / NRRL B-23932 / Pf-5).